The sequence spans 523 residues: VFPKVPFDVPKATVESYTRFIRVLRDELAGGVSPQGIRRLRNPAEIQPSQGFILIQLTGYVGSVTLIMDVRNAYLLGYLSHNVLYHFNDVSASSIASVFPDAQRRQLPFGGGYPSMRNYAPERDQIDHGIVELAYAVDRLYYSQNNNQIALGLVICAGMVAEASRFRYIEGLVRQSIVGPGDYRTFRPDALMYSIVTQWQTLSERIQGSFNGAFQPVQLGYASDPFYWDNVAQAITRLSLMLFVCSQPPRQSDSPLVIRSFVDRNDPVCPSGETTAFIVGRDGRCVDVKVEEFFDGNKVQMWPCKSSQNANQLWTLKRDGTIRCQGKCLTVRSPQLYAMIWDCTTFYAPATKWEVWDNGTIINPASGRVLTAPTGEAGVTLNLQFNEYAASQAWRVTNVTVPTVTTIVGYDDLCLETNGNGVWLANCVKGKAQQRWTLYADGTIRSQSTLSKCLACSGSCVKLAKIVNTDCAGSANSRWYFDNYGGIVNLRTGMVMDVKESNPSLNEIIAHPWHGNSNQQWFL.

Residues tyrosine 74, tyrosine 113, glutamate 162, and arginine 165 contribute to the active site. 111–113 (GGY) serves as a coordination point for AMP. Disulfide bonds link cysteine 245–cysteine 269 and cysteine 285–cysteine 304. A propeptide spans 251 to 265 (QSDSPLVIRSFVDRN) (linker peptide). One can recognise a Ricin B-type lectin 1 domain in the interval 270–397 (PSGETTAFIV…YAASQAWRVT (128 aa)). A carbohydrate-binding positions include 287–291 (DVKVE), glutamine 300, lysine 305, and asparagine 311. A disulfide bridge links cysteine 328 with cysteine 343. Residues asparagine 358 and asparagine 398 each coordinate a carbohydrate. N-linked (GlcNAc...) asparagine glycans are attached at residues asparagine 358 and asparagine 398. The Ricin B-type lectin 2 domain maps to 400-523 (TVPTVTTIVG…HGNSNQQWFL (124 aa)). Cystine bridges form between cysteine 414-cysteine 427 and cysteine 453-cysteine 471.

It in the N-terminal section; belongs to the ribosome-inactivating protein family. Type 2 RIP subfamily. Disulfide-linked dimer of A and B chains. In terms of processing, N-glycosylated. Contains mannose and galactose. In terms of tissue distribution, expressed in roots (at protein level). Expressed in seeds (at protein level).

It catalyses the reaction Endohydrolysis of the N-glycosidic bond at one specific adenosine on the 28S rRNA.. With respect to regulation, hemagglutinating activity is inhibited by galactose and structurally related sugars. Functionally, has N-glycosidase activity and is responsible for inhibiting protein synthesis through the catalytic inactivation of 60S ribosomal subunits by removing a specific adenine of 28S rRNA. Inhibits GTP-dependent binding of EF2 (elongation factor 2) to ribosomes. In terms of biological role, binds to cell receptors and probably facilitates the entry into the cell of the A chain. Also acts as a galactose-specific lectin responsible for cell agglutination. This is Volkensin from Adenia volkensii (Kilyambiti plant).